A 509-amino-acid chain; its full sequence is tRNA-2-methylthio-N(6)-dimethylallyladenosine synthase (509 aa).

The interval 1–21 is disordered; that stretch reads MNEKQRIESGQVNPSDKKSEK. Positions 66–184 constitute an MTTase N-terminal domain; the sequence is RKFYIRTYGC…LPELLSEAYL (119 aa). Residues cysteine 75, cysteine 111, cysteine 145, cysteine 221, cysteine 225, and cysteine 228 each contribute to the [4Fe-4S] cluster site. Residues 207 to 437 form the Radical SAM core domain; it reads RTGKIKGWVN…NEVVNEISAK (231 aa). The TRAM domain maps to 440–503; that stretch reads KEYEGQVVEV…TWSLDGEMVG (64 aa).

It belongs to the methylthiotransferase family. MiaB subfamily. As to quaternary structure, monomer. [4Fe-4S] cluster serves as cofactor.

The protein resides in the cytoplasm. It catalyses the reaction N(6)-dimethylallyladenosine(37) in tRNA + (sulfur carrier)-SH + AH2 + 2 S-adenosyl-L-methionine = 2-methylsulfanyl-N(6)-dimethylallyladenosine(37) in tRNA + (sulfur carrier)-H + 5'-deoxyadenosine + L-methionine + A + S-adenosyl-L-homocysteine + 2 H(+). In terms of biological role, catalyzes the methylthiolation of N6-(dimethylallyl)adenosine (i(6)A), leading to the formation of 2-methylthio-N6-(dimethylallyl)adenosine (ms(2)i(6)A) at position 37 in tRNAs that read codons beginning with uridine. In Bacillus licheniformis (strain ATCC 14580 / DSM 13 / JCM 2505 / CCUG 7422 / NBRC 12200 / NCIMB 9375 / NCTC 10341 / NRRL NRS-1264 / Gibson 46), this protein is tRNA-2-methylthio-N(6)-dimethylallyladenosine synthase.